Here is a 323-residue protein sequence, read N- to C-terminus: Delta-aminolevulinic acid dehydratase (323 aa).

The Zn(2+) site is built by Cys-118, Cys-120, and Cys-128. Lys-195 acts as the Schiff-base intermediate with substrate in catalysis. 5-aminolevulinate contacts are provided by Arg-205 and Arg-217. Residue Glu-233 coordinates Mg(2+). Lys-248 serves as the catalytic Schiff-base intermediate with substrate. Positions 274 and 313 each coordinate 5-aminolevulinate.

The protein belongs to the ALAD family. In terms of assembly, homooctamer. It depends on Zn(2+) as a cofactor.

The catalysed reaction is 2 5-aminolevulinate = porphobilinogen + 2 H2O + H(+). The protein operates within porphyrin-containing compound metabolism; protoporphyrin-IX biosynthesis; coproporphyrinogen-III from 5-aminolevulinate: step 1/4. Its function is as follows. Catalyzes an early step in the biosynthesis of tetrapyrroles. Binds two molecules of 5-aminolevulinate per subunit, each at a distinct site, and catalyzes their condensation to form porphobilinogen. The protein is Delta-aminolevulinic acid dehydratase (hemB) of Staphylococcus aureus.